The chain runs to 323 residues: Transcription factor MYB108 (323 aa).

HTH myb-type domains are found at residues 16–68 (EMDL…LNYL) and 69–123 (RPDV…QKHA). 2 DNA-binding regions (H-T-H motif) span residues 44–68 (WNSL…LNYL) and 96–119 (WSKI…RTRV).

As to quaternary structure, interacts with BOI, but not with BRG1. In terms of processing, ubiquitinated in vitro by BOI. Expressed specifically in flowers. Restricted to anthers in maturing flowers. Strongest expression in the vascular and connective tissue where the anther attaches to the filament. Not detected in pollen.

The protein resides in the nucleus. Functionally, transcription factor contributing to the regulation of stamen maturation and male fertility in response to jasmonate signaling. Required for correct timing of anther dehiscence. Acts as a negative regulator of abscisic acid-induced cell death. Not involved in the regulation of BOI. Regulated by MYB21 and at a lower level by MYB24. Negatively regulated by the proteasome in an SCF(COI1) E3 ubiquitin-protein ligase complex-dependent manner. This Arabidopsis thaliana (Mouse-ear cress) protein is Transcription factor MYB108 (MYB108).